The primary structure comprises 468 residues: Efflux pump azaK (468 aa).

Residues 1–30 (MTVHPPAVADETSPLLPSQDGPGHNGIVPA) form a disordered region. The next 6 helical transmembrane spans lie at 43–65 (QVALLCCARAIDPLAFFTIFPFV), 80–100 (VGFYSGIIESLFSVTQMMLMI), 112–132 (KPVLILSLAGLSVSSALFGFS), 135–155 (LGQMVFFRCLAGTFGGTVVTV), 174–194 (YFSLANTIGTVIGPLLGGALC), and 207–227 (LPTVAAGAFGVTVTVACLMFV). N228 carries N-linked (GlcNAc...) asparagine glycosylation. The next 6 helical transmembrane spans lie at 257-277 (VLPVLYIHGHSMMLAFAYTAV), 296-316 (FYISLFLGGSGIAQTIWLVLV), 329-349 (ILRGLCFVWIIFLAATVGASV), 357-377 (VAFWILAPLALVLGSSVAMQL), 387-407 (VSPSPAALGTLNAMSLAIISF), and 429-449 (PGFYTFWLVLGGLVLVLAFTL).

Belongs to the major facilitator superfamily.

It is found in the cell membrane. Functionally, efflux pump that might be required for efficient secretion of azaphilones. The chain is Efflux pump azaK from Aspergillus niger (strain ATCC 1015 / CBS 113.46 / FGSC A1144 / LSHB Ac4 / NCTC 3858a / NRRL 328 / USDA 3528.7).